Consider the following 164-residue polypeptide: Respiratory growth induced protein 2 (164 aa).

The protein belongs to the RGI1 family.

The protein resides in the cytoplasm. Its function is as follows. Involved in the control of energetic metabolism and significantly contribute to cell fitness, especially under respiratory growth conditions. The polypeptide is Respiratory growth induced protein 2 (RGI2) (Saccharomyces cerevisiae (strain JAY291) (Baker's yeast)).